The following is a 123-amino-acid chain: Cytochrome c-555 (123 aa).

A signal peptide spans 1–27 (MDHKKTSIRTTALAALVLGAVAAPAFS). Heme c contacts are provided by Cys46, Cys49, His50, and Met86.

Post-translationally, binds 1 heme c group covalently per subunit.

The sequence is that of Cytochrome c-555 from Methylococcus capsulatus (strain ATCC 33009 / NCIMB 11132 / Bath).